Consider the following 498-residue polypeptide: NAD(P)H-quinone oxidoreductase chain 4, chloroplastic (498 aa).

14 helical membrane passes run 4–24 (FPWL…IVLF), 37–57 (YCIC…HFEL), 80–100 (FGID…TTLA), 112–129 (KLFY…LGTF), 134–154 (ILLF…LLSM), 167–187 (FILY…GMSL), 208–228 (ALEI…SPII), 242–262 (HYST…YGLV), 272–292 (AHSI…IYAA), 305–325 (IAYS…SISE), 330–350 (GAIL…FLAG), 386–406 (LALP…GIIT), 416–436 (ILIT…SLSI), and 463–483 (FISI…DFIF).

Belongs to the complex I subunit 4 family.

The protein resides in the plastid. The protein localises to the chloroplast thylakoid membrane. It carries out the reaction a plastoquinone + NADH + (n+1) H(+)(in) = a plastoquinol + NAD(+) + n H(+)(out). The catalysed reaction is a plastoquinone + NADPH + (n+1) H(+)(in) = a plastoquinol + NADP(+) + n H(+)(out). The protein is NAD(P)H-quinone oxidoreductase chain 4, chloroplastic of Phaseolus vulgaris (Kidney bean).